The following is an 86-amino-acid chain: MQDELFETEKAPQKNAKNAKNAPKKSFEEHVHSLERVIDRLNDPNLSLKDGMDLYKTAMQELFLAQKLLENAYSEYEKLQTPNKKA.

Residues 1–26 (MQDELFETEKAPQKNAKNAKNAPKKS) form a disordered region.

Belongs to the XseB family. As to quaternary structure, heterooligomer composed of large and small subunits.

Its subcellular location is the cytoplasm. It catalyses the reaction Exonucleolytic cleavage in either 5'- to 3'- or 3'- to 5'-direction to yield nucleoside 5'-phosphates.. Its function is as follows. Bidirectionally degrades single-stranded DNA into large acid-insoluble oligonucleotides, which are then degraded further into small acid-soluble oligonucleotides. This Helicobacter pylori (strain J99 / ATCC 700824) (Campylobacter pylori J99) protein is Exodeoxyribonuclease 7 small subunit.